Here is a 452-residue protein sequence, read N- to C-terminus: Glutamyl-tRNA(Gln) amidotransferase subunit A (452 aa).

Active-site charge relay system residues include Lys-56 and Ser-131. The active-site Acyl-ester intermediate is the Ser-155.

It belongs to the amidase family. GatA subfamily. In terms of assembly, heterotrimer of A, B and C subunits.

The catalysed reaction is L-glutamyl-tRNA(Gln) + L-glutamine + ATP + H2O = L-glutaminyl-tRNA(Gln) + L-glutamate + ADP + phosphate + H(+). Functionally, allows the formation of correctly charged Gln-tRNA(Gln) through the transamidation of misacylated Glu-tRNA(Gln) in organisms which lack glutaminyl-tRNA synthetase. The reaction takes place in the presence of glutamine and ATP through an activated gamma-phospho-Glu-tRNA(Gln). This chain is Glutamyl-tRNA(Gln) amidotransferase subunit A, found in Campylobacter concisus (strain 13826).